Consider the following 581-residue polypeptide: Trehalase (581 aa).

Belongs to the glycosyl hydrolase 15 family. In terms of assembly, monomer.

It catalyses the reaction alpha,alpha-trehalose + H2O = alpha-D-glucose + beta-D-glucose. The protein operates within glycan degradation; trehalose degradation; D-glucose from alpha,alpha-trehalose: step 1/1. Inhibited by validamycin A. Its function is as follows. Catalyzes the hydrolysis of alpha,alpha-trehalose into two molecules of D-glucose. The chain is Trehalase from Thermoplasma acidophilum (strain ATCC 25905 / DSM 1728 / JCM 9062 / NBRC 15155 / AMRC-C165).